We begin with the raw amino-acid sequence, 293 residues long: Glutamyl-Q tRNA(Asp) synthetase (293 aa).

Residues Arg9–Ser13 and Glu45 each bind L-glutamate. The 'HIGH' region signature appears at Pro12–Ser22. Zn(2+)-binding residues include Cys101, Cys103, Tyr115, and Cys119. Residues Tyr172 and Arg190 each contribute to the L-glutamate site. The 'KMSKS' region signature appears at Lys228–Gln232. Lys231 is an ATP binding site.

The protein belongs to the class-I aminoacyl-tRNA synthetase family. GluQ subfamily. It depends on Zn(2+) as a cofactor.

Functionally, catalyzes the tRNA-independent activation of glutamate in presence of ATP and the subsequent transfer of glutamate onto a tRNA(Asp). Glutamate is transferred on the 2-amino-5-(4,5-dihydroxy-2-cyclopenten-1-yl) moiety of the queuosine in the wobble position of the QUC anticodon. The protein is Glutamyl-Q tRNA(Asp) synthetase of Shewanella frigidimarina (strain NCIMB 400).